Here is a 396-residue protein sequence, read N- to C-terminus: E3 ubiquitin-protein transferase MAEA (396 aa).

An extracellular and involved in cell to cell contact region spans residues 1 to 124 (MAVQESAAQL…AAASMWKRKR (124 aa)). Phosphothreonine is present on threonine 28. A LisH domain is found at 121-153 (KRKRMDRMMVEHLLRCGYYNTAVKLARQSGIED). Residues 159–216 (MFLTAKEVEESLERRETATCLAWCHDNKSRLRKMKSCLEFSLRIQEFIELVRQNKRLD) enclose the CTLH domain. Residues 314–381 (CPVCSRSLNK…QDDKVVCPRT (68 aa)) form an RING-Gid-type zinc finger.

As to quaternary structure, identified in the CTLH complex that contains GID4, RANBP9 and/or RANBP10, MKLN1, MAEA, RMND5A (or alternatively its paralog RMND5B), GID8, ARMC8, WDR26 and YPEL5. Within this complex, MAEA, RMND5A (or alternatively its paralog RMND5B), GID8, WDR26, and RANBP9 and/or RANBP10 form the catalytic core, while GID4, MKLN1, ARMC8 and YPEL5 have ancillary roles. Interacts with F-actin. Autoubiquitinated as component of the CTLH E3 ubiquitin-protein ligase complex (in vitro). As to expression, detected in embryonic fibroblasts. Detected in macrophages. Detected in heart. liver, spleen and kidney (at protein level).

The protein localises to the cytoplasm. The protein resides in the nucleus. It localises to the nucleoplasm. It is found in the nucleus matrix. Its subcellular location is the cell membrane. The protein localises to the cytoskeleton. It carries out the reaction S-ubiquitinyl-[E2 ubiquitin-conjugating enzyme]-L-cysteine + [acceptor protein]-L-lysine = [E2 ubiquitin-conjugating enzyme]-L-cysteine + N(6)-ubiquitinyl-[acceptor protein]-L-lysine.. Functionally, core component of the CTLH E3 ubiquitin-protein ligase complex that selectively accepts ubiquitin from UBE2H and mediates ubiquitination and subsequent proteasomal degradation of the transcription factor HBP1. MAEA and RMND5A are both required for catalytic activity of the CTLH E3 ubiquitin-protein ligase complex. MAEA is required for normal cell proliferation. The CTLH E3 ubiquitin-protein ligase complex is not required for the degradation of enzymes involved in gluconeogenesis, such as FBP1. Plays a role in erythroblast enucleation during erythrocyte maturation and in the development of mature macrophages. Mediates the attachment of erythroid cell to mature macrophages; this MAEA-mediated contact inhibits erythroid cell apoptosis. Participates in erythroblastic island formation, which is the functional unit of definitive erythropoiesis. Associates with F-actin to regulate actin distribution in erythroblasts and macrophages. May contribute to nuclear architecture and cells division events. The sequence is that of E3 ubiquitin-protein transferase MAEA (Maea) from Mus musculus (Mouse).